A 389-amino-acid polypeptide reads, in one-letter code: Chalcone synthase 1 (389 aa).

Cys-163 is a catalytic residue.

The protein belongs to the thiolase-like superfamily. Chalcone/stilbene synthases family.

It catalyses the reaction (E)-4-coumaroyl-CoA + 3 malonyl-CoA + 3 H(+) = 2',4,4',6'-tetrahydroxychalcone + 3 CO2 + 4 CoA. The protein operates within secondary metabolite biosynthesis; flavonoid biosynthesis. The primary product of this enzyme is 4,2',4',6'-tetrahydroxychalcone (also termed naringenin-chalcone or chalcone) which can under specific conditions spontaneously isomerize into naringenin. The polypeptide is Chalcone synthase 1 (CHS1) (Citrus sinensis (Sweet orange)).